The following is a 307-amino-acid chain: Voltage-dependent anion channel-forming protein alr2987 (307 aa).

Helical transmembrane passes span 19-39 (VIGA…LVTL), 47-67 (VSQP…LLVF), 209-229 (PLAY…LLPF), and 238-258 (WTGL…AIGL).

It belongs to the anion channel-forming bestrophin (TC 1.A.46) family.

Its subcellular location is the cell membrane. The polypeptide is Voltage-dependent anion channel-forming protein alr2987 (Nostoc sp. (strain PCC 7120 / SAG 25.82 / UTEX 2576)).